Here is a 307-residue protein sequence, read N- to C-terminus: Ornithine carbamoyltransferase (307 aa).

Carbamoyl phosphate is bound by residues 51–54 (STRT), Gln-78, Arg-102, and 129–132 (HPVQ). Residues Asn-159, Asp-223, and 227–228 (SM) each bind L-ornithine. Residues 263–264 (CL) and Arg-291 contribute to the carbamoyl phosphate site.

The protein belongs to the aspartate/ornithine carbamoyltransferase superfamily. OTCase family.

The protein resides in the cytoplasm. The enzyme catalyses carbamoyl phosphate + L-ornithine = L-citrulline + phosphate + H(+). Its pathway is amino-acid biosynthesis; L-arginine biosynthesis; L-arginine from L-ornithine and carbamoyl phosphate: step 1/3. Reversibly catalyzes the transfer of the carbamoyl group from carbamoyl phosphate (CP) to the N(epsilon) atom of ornithine (ORN) to produce L-citrulline. The protein is Ornithine carbamoyltransferase of Wolinella succinogenes (strain ATCC 29543 / DSM 1740 / CCUG 13145 / JCM 31913 / LMG 7466 / NCTC 11488 / FDC 602W) (Vibrio succinogenes).